We begin with the raw amino-acid sequence, 102 residues long: NADH-quinone oxidoreductase subunit K (102 aa).

A run of 3 helical transmembrane segments spans residues 6 to 26 (MHHG…GILV), 30 to 50 (LIFI…AFVV), and 64 to 84 (FIFI…LLLL).

This sequence belongs to the complex I subunit 4L family. In terms of assembly, NDH-1 is composed of 14 different subunits. Subunits NuoA, H, J, K, L, M, N constitute the membrane sector of the complex.

The protein localises to the cell inner membrane. The enzyme catalyses a quinone + NADH + 5 H(+)(in) = a quinol + NAD(+) + 4 H(+)(out). Its function is as follows. NDH-1 shuttles electrons from NADH, via FMN and iron-sulfur (Fe-S) centers, to quinones in the respiratory chain. The immediate electron acceptor for the enzyme in this species is believed to be ubiquinone. Couples the redox reaction to proton translocation (for every two electrons transferred, four hydrogen ions are translocated across the cytoplasmic membrane), and thus conserves the redox energy in a proton gradient. The sequence is that of NADH-quinone oxidoreductase subunit K from Nitrosospira multiformis (strain ATCC 25196 / NCIMB 11849 / C 71).